The chain runs to 159 residues: MFISRELKYILLTSVSALFISAVLGLFCGLSFFTILVRSLLQFVFFFVIGLLIEYIFKKYLSNLFSTELSGNMENKPQDDKKSDKDFKENLDFQNKNSLYENSQNISSSGDFIEEVKKYKFETEDVSRGSDKNKKMSFIEDNDPKVVADAIKTLMSKKE.

2 helical membrane-spanning segments follow: residues 17 to 37 (ALFI…TILV) and 40 to 60 (LLQF…FKKY).

Its subcellular location is the cell membrane. This is an uncharacterized protein from Borreliella burgdorferi (strain ATCC 35210 / DSM 4680 / CIP 102532 / B31) (Borrelia burgdorferi).